We begin with the raw amino-acid sequence, 361 residues long: DNA replication and repair protein RecF (361 aa).

30-37 (GANGSGKT) provides a ligand contact to ATP.

The protein belongs to the RecF family.

It localises to the cytoplasm. In terms of biological role, the RecF protein is involved in DNA metabolism; it is required for DNA replication and normal SOS inducibility. RecF binds preferentially to single-stranded, linear DNA. It also seems to bind ATP. The protein is DNA replication and repair protein RecF of Chromohalobacter salexigens (strain ATCC BAA-138 / DSM 3043 / CIP 106854 / NCIMB 13768 / 1H11).